A 279-amino-acid chain; its full sequence is Acyl-[acyl-carrier-protein]--UDP-N-acetylglucosamine O-acyltransferase (279 aa).

The disordered stretch occupies residues 260-279; sequence AAKEAFQEESVDKEGALVES.

This sequence belongs to the transferase hexapeptide repeat family. LpxA subfamily. Homotrimer.

The protein localises to the cytoplasm. The enzyme catalyses a (3R)-hydroxyacyl-[ACP] + UDP-N-acetyl-alpha-D-glucosamine = a UDP-3-O-[(3R)-3-hydroxyacyl]-N-acetyl-alpha-D-glucosamine + holo-[ACP]. It functions in the pathway glycolipid biosynthesis; lipid IV(A) biosynthesis; lipid IV(A) from (3R)-3-hydroxytetradecanoyl-[acyl-carrier-protein] and UDP-N-acetyl-alpha-D-glucosamine: step 1/6. In terms of biological role, involved in the biosynthesis of lipid A, a phosphorylated glycolipid that anchors the lipopolysaccharide to the outer membrane of the cell. The chain is Acyl-[acyl-carrier-protein]--UDP-N-acetylglucosamine O-acyltransferase from Chlamydia abortus (strain DSM 27085 / S26/3) (Chlamydophila abortus).